A 124-amino-acid polypeptide reads, in one-letter code: Ribonuclease P protein component (124 aa).

It belongs to the RnpA family. Consists of a catalytic RNA component (M1 or rnpB) and a protein subunit.

It carries out the reaction Endonucleolytic cleavage of RNA, removing 5'-extranucleotides from tRNA precursor.. Functionally, RNaseP catalyzes the removal of the 5'-leader sequence from pre-tRNA to produce the mature 5'-terminus. It can also cleave other RNA substrates such as 4.5S RNA. The protein component plays an auxiliary but essential role in vivo by binding to the 5'-leader sequence and broadening the substrate specificity of the ribozyme. This is Ribonuclease P protein component from Synechocystis sp. (strain ATCC 27184 / PCC 6803 / Kazusa).